An 89-amino-acid polypeptide reads, in one-letter code: Small ribosomal subunit protein uS14 (89 aa).

The protein belongs to the universal ribosomal protein uS14 family. As to quaternary structure, part of the 30S ribosomal subunit. Contacts proteins S3 and S10.

Binds 16S rRNA, required for the assembly of 30S particles and may also be responsible for determining the conformation of the 16S rRNA at the A site. This is Small ribosomal subunit protein uS14 from Chlorobium phaeovibrioides (strain DSM 265 / 1930) (Prosthecochloris vibrioformis (strain DSM 265)).